The following is a 1226-amino-acid chain: DNA-directed RNA polymerase subunit beta'' (1226 aa).

Zn(2+) contacts are provided by cysteine 223, cysteine 297, cysteine 304, and cysteine 307.

Belongs to the RNA polymerase beta' chain family. RpoC2 subfamily. In plastids the minimal PEP RNA polymerase catalytic core is composed of four subunits: alpha, beta, beta', and beta''. When a (nuclear-encoded) sigma factor is associated with the core the holoenzyme is formed, which can initiate transcription. Requires Zn(2+) as cofactor.

The protein resides in the plastid. The protein localises to the chloroplast. The catalysed reaction is RNA(n) + a ribonucleoside 5'-triphosphate = RNA(n+1) + diphosphate. DNA-dependent RNA polymerase catalyzes the transcription of DNA into RNA using the four ribonucleoside triphosphates as substrates. The sequence is that of DNA-directed RNA polymerase subunit beta'' from Pyropia yezoensis (Susabi-nori).